Here is a 372-residue protein sequence, read N- to C-terminus: Y-box-binding protein 3 (372 aa).

The disordered stretch occupies residues 1 to 82 (MSEAGEATTT…LATAAGSEDA (82 aa)). The residue at position 2 (S2) is an N-acetylserine. S2 is subject to Phosphoserine. The span at 7-28 (ATTTTTTTLPQAPTEAAAAAPQ) shows a compositional bias: low complexity. S34 is subject to Phosphoserine. Low complexity predominate over residues 35–79 (PVGSGAPQAAAPAPAAHVAGNPGGDAAPAATGTAAAASLATAAGS). Residues 93–157 (GTVKWFNVRN…GEKGAEAANV (65 aa)) form the CSD domain. A phosphoserine mark is found at S134, S201, S203, and S204. The disordered stretch occupies residues 181–372 (YYGRRRGPPR…APPTQQSSAE (192 aa)). A compositionally biased stretch (basic residues) spans 222–238 (QLRRPQYRPQYRQRRFP). R251 bears the Omega-N-methylarginine mark. Residues 314-324 (QQATSGPNQPS) show a composition bias toward polar residues. Phosphoserine is present on S324. R326 carries the post-translational modification Omega-N-methylarginine. The segment covering 327–340 (RGYRRPYNYRRRPR) has biased composition (basic residues). Phosphoserine is present on residues S346, S369, and S370.

In terms of assembly, found in a mRNP complex with YBX2. Interacts with RRP1B. In terms of tissue distribution, highly expressed in skeletal muscle and heart.

The protein localises to the cytoplasm. Its subcellular location is the nucleus. Its function is as follows. Binds to the GM-CSF promoter. Seems to act as a repressor. Also binds to full-length mRNA and to short RNA sequences containing the consensus site 5'-UCCAUCA-3'. May have a role in translation repression. The sequence is that of Y-box-binding protein 3 (YBX3) from Homo sapiens (Human).